We begin with the raw amino-acid sequence, 343 residues long: Fructose-1,6-bisphosphatase class 1 (343 aa).

4 residues coordinate Mg(2+): Glu-91, Asp-113, Ile-115, and Asp-116. Substrate contacts are provided by residues 116–119 (DGSS), Asn-210, and Lys-276. Glu-282 lines the Mg(2+) pocket.

Belongs to the FBPase class 1 family. In terms of assembly, homotetramer. It depends on Mg(2+) as a cofactor.

Its subcellular location is the cytoplasm. The enzyme catalyses beta-D-fructose 1,6-bisphosphate + H2O = beta-D-fructose 6-phosphate + phosphate. Its pathway is carbohydrate biosynthesis; gluconeogenesis. The chain is Fructose-1,6-bisphosphatase class 1 from Parvibaculum lavamentivorans (strain DS-1 / DSM 13023 / NCIMB 13966).